We begin with the raw amino-acid sequence, 383 residues long: Delta(12)-fatty-acid desaturase (383 aa).

Residues 1–24 (MGAGGRMPVPTSSKKSETDTTKRV) form a disordered region. The segment covering 14–24 (KKSETDTTKRV) has biased composition (basic and acidic residues). A helical transmembrane segment spans residues 56–76 (LISDIIIASCFYYVATNYFSL). Positions 105 to 109 (HECGH) match the Histidine box-1 motif. Residues 117–137 (WLDDTVGLIFHSFLLVPYFSW) traverse the membrane as a helical segment. A Histidine box-2 motif is present at residues 141-145 (HRRHH). 3 helical membrane passes run 179 to 199 (IMML…FNVS), 225 to 245 (IYLS…YAAA), and 252 to 272 (ICLY…ITYL). The Histidine box-3 signature appears at 315-319 (HVAHH).

The protein belongs to the fatty acid desaturase type 1 family. In terms of assembly, homo- and heterodimer. Interacts with FAD3 but not with FAD6. FAD2-FAD3 heterodimers can form a metabolic channel in which 18:1-PC is converted to 18:3-PC without releasing a free 18:2-PC intermediate. In terms of tissue distribution, expressed in shoots and roots. Expressed in leaves, stems, flowers and siliques.

The protein resides in the endoplasmic reticulum membrane. The protein localises to the microsome membrane. The enzyme catalyses (9Z)-octadecenoyl-CoA + 2 Fe(II)-[cytochrome b5] + O2 + 2 H(+) = (9Z,12Z)-octadecadienoyl-CoA + 2 Fe(III)-[cytochrome b5] + 2 H2O. It carries out the reaction (9Z)-hexadecenoyl-CoA + 2 Fe(II)-[cytochrome b5] + O2 + 2 H(+) = (9Z,12Z)-hexadecadienoyl-CoA + 2 Fe(III)-[cytochrome b5] + 2 H2O. The catalysed reaction is a (9Z)-octadecenoyl-containing glycerolipid + 2 Fe(II)-[cytochrome b5] + O2 + 2 H(+) = a (9Z,12Z)-octadecadienoyl-containing glycerolipid + 2 Fe(III)-[cytochrome b5] + 2 H2O. It catalyses the reaction (9Z)-octadecenoyl-CoA + AH2 + O2 = (9Z,12Z)-octadecadienoyl-CoA + A + 2 H2O. The enzyme catalyses (9Z)-hexadecenoyl-CoA + AH2 + O2 = (9Z,12Z)-hexadecadienoyl-CoA + A + 2 H2O. It carries out the reaction (9Z)-tetradecenoyl-CoA + 2 Fe(II)-[cytochrome b5] + O2 + 2 H(+) = (9Z,12Z)-tetradecadienoyl-CoA + 2 Fe(III)-[cytochrome b5] + 2 H2O. The catalysed reaction is (9Z)-pentadecenoyl-CoA + 2 Fe(II)-[cytochrome b5] + O2 + 2 H(+) = (9Z,12Z)-pentadecadienoyl-CoA + 2 Fe(III)-[cytochrome b5] + 2 H2O. It catalyses the reaction (9Z)-heptadecenoyl-CoA + 2 Fe(II)-[cytochrome b5] + O2 + 2 H(+) = (9Z,12Z)-heptadecadienoyl-CoA + 2 Fe(III)-[cytochrome b5] + 2 H2O. The protein operates within lipid metabolism; polyunsaturated fatty acid biosynthesis. Its function is as follows. ER (microsomal) omega-6 fatty acid desaturase introduces the second double bond in the biosynthesis of 18:3 fatty acids, important constituents of plant membranes. Delta(12)-desaturase with regioselectivity determined by the double bond (delta(9) position) and carboxyl group of the substrate. Can use both 16:1 and 18:1 fatty acids as substrates. It is thought to use cytochrome b5 as an electron donor and to act on fatty acids esterified to phosphatidylcholine (PC) and, possibly, other phospholipids. Very low constitutive hydroxylation activity. Required for desaturation of fatty acids present in extraplastidial membranes, including mitochondria. Required for salt tolerance during seed germination and early seedling growth. The sequence is that of Delta(12)-fatty-acid desaturase from Arabidopsis thaliana (Mouse-ear cress).